Consider the following 422-residue polypeptide: MSHLFSKACQYFPGGVNSPVRACRAVNITPPIVARASKEVFVDSLDKTFIDFCGSWGSLIHGHSHPKICTAIRQGLERGSSYGLTSEQEILFAEEIFSYLGLETNYKIRFMSTGSEATMTAVRLARGITGRPIIIKFLGCYHGHADTFLQEKPFSHTSLETLDLAHPLTLSLPFNDFPLFQTVMNSLGHKVAGVIFEPVCANMGVILPVPGFIEGVIQTCQQTGSFSIMDEVVTGFRVAQGGAAALYHVKPDILVFGKILGGGLPASAVVTPKDIMDHLAPEGKIFQAGTLSGNPLAMIAGKVSVNLCREQGFYTQLATIEQNFLSPIEHMIRTTGIPVTLVRYGSLFSFFFNPNRPNNLADAQLSDIEAFQKFYQSAFSKGVYLSPSPFEASFLSAAHSMESLDYAQTALIESLEQVFSLV.

N6-(pyridoxal phosphate)lysine is present on Lys258.

Belongs to the class-III pyridoxal-phosphate-dependent aminotransferase family. HemL subfamily. Homodimer. The cofactor is pyridoxal 5'-phosphate.

It localises to the cytoplasm. It catalyses the reaction (S)-4-amino-5-oxopentanoate = 5-aminolevulinate. It participates in porphyrin-containing compound metabolism; protoporphyrin-IX biosynthesis; 5-aminolevulinate from L-glutamyl-tRNA(Glu): step 2/2. This is Glutamate-1-semialdehyde 2,1-aminomutase from Chlamydia trachomatis serovar D (strain ATCC VR-885 / DSM 19411 / UW-3/Cx).